We begin with the raw amino-acid sequence, 858 residues long: Protein translocase subunit SecA (858 aa).

ATP-binding positions include Gln-88, 106–110 (GEGKT), and Asp-494. The tract at residues 808–848 (KEDRGQLSYSGGGNAEDARNTPAKAAPRIGRNDPCPCGSGR) is disordered. Residues Cys-842, Cys-844, Cys-853, and Cys-854 each contribute to the Zn(2+) site.

It belongs to the SecA family. In terms of assembly, monomer and homodimer. Part of the essential Sec protein translocation apparatus which comprises SecA, SecYEG and auxiliary proteins SecDF-YajC and YidC. Requires Zn(2+) as cofactor.

The protein localises to the cell inner membrane. Its subcellular location is the cytoplasm. The enzyme catalyses ATP + H2O + cellular proteinSide 1 = ADP + phosphate + cellular proteinSide 2.. Functionally, part of the Sec protein translocase complex. Interacts with the SecYEG preprotein conducting channel. Has a central role in coupling the hydrolysis of ATP to the transfer of proteins into and across the cell membrane, serving as an ATP-driven molecular motor driving the stepwise translocation of polypeptide chains across the membrane. The chain is Protein translocase subunit SecA from Desulfovibrio desulfuricans (strain ATCC 27774 / DSM 6949 / MB).